We begin with the raw amino-acid sequence, 165 residues long: MESGDYDVETKREKLKSVLSQLLADPILADVPRNPTLSDVVTLVSLEKGSAMRLSVVKLDGSSLDVAVMNSATLKDLKLLIKKKVNEMEQANMGHRHISWKHVWSNFCLSCNNEKLLDDNAVLQDVGIRNNSQVTFMPYVMKKGRGRHSKRKKHRLFRSLHKTSS.

Residues 52 to 137 (MRLSVVKLDG…IRNNSQVTFM (86 aa)) form the Ubiquitin-like domain. Residues 145 to 165 (RGRHSKRKKHRLFRSLHKTSS) form a disordered region.

Component of the U11/U12 snRNPs that are part of the U12-type spliceosome.

It localises to the nucleus. This Arabidopsis thaliana (Mouse-ear cress) protein is U11/U12 small nuclear ribonucleoprotein 25 kDa protein (SNRNP25).